We begin with the raw amino-acid sequence, 395 residues long: MKFKRVFGLVMDSVGAGAAPDANKFGDEGADTLGHVGHHFAGKLALPNLAKIGLSNLRETPIEGVPVADDPHAYYGKMREISAGKDSMDGHWEMMGLPVRKALSTFPNGFPADIITKLETFSGRKVIGNRPESGTKIIAELGEQQMKTGDLIVYTSGDSVLQIAAHEDVIPLAELYKICEYARSLVNGPEYLVGRIIARPYVGPDADHFTRTANRRDFTLEPTGETDLDRLQAAGVRVVAVGKTNDIFSGHGIDEAYHNESNMDGMDHVDHVMTEDFTGFCFINLVDFDAMYGHRRNPDGFGQALMDFDQRLGTVLANMHDDDLLMITADHGNDPTYTGTDHTREQVPLLVYSPSFKQGGSLGVRSPFADFGATVLDNFGVAGNHEGHSFLAELK.

Mn(2+) is bound by residues D12, D289, H294, D330, H331, and H342.

This sequence belongs to the phosphopentomutase family. The cofactor is Mn(2+).

It is found in the cytoplasm. It catalyses the reaction 2-deoxy-alpha-D-ribose 1-phosphate = 2-deoxy-D-ribose 5-phosphate. It carries out the reaction alpha-D-ribose 1-phosphate = D-ribose 5-phosphate. The protein operates within carbohydrate degradation; 2-deoxy-D-ribose 1-phosphate degradation; D-glyceraldehyde 3-phosphate and acetaldehyde from 2-deoxy-alpha-D-ribose 1-phosphate: step 1/2. Functionally, isomerase that catalyzes the conversion of deoxy-ribose 1-phosphate (dRib-1-P) and ribose 1-phosphate (Rib-1-P) to deoxy-ribose 5-phosphate (dRib-5-P) and ribose 5-phosphate (Rib-5-P), respectively. The chain is Phosphopentomutase from Levilactobacillus brevis (strain ATCC 367 / BCRC 12310 / CIP 105137 / JCM 1170 / LMG 11437 / NCIMB 947 / NCTC 947) (Lactobacillus brevis).